Reading from the N-terminus, the 367-residue chain is ELAV-like protein 3 (367 aa).

3 RRM domains span residues 39–117 (TNLI…YARP), 125–205 (ANLY…FANN), and 284–362 (WCIF…FKTS).

The protein belongs to the RRM elav family. In terms of assembly, interacts with MAP1B light chain LC1. Brain specific.

In terms of biological role, RNA-binding protein that binds to AU-rich element (ARE) sequences of target mRNAs, including VEGF mRNA. May also bind poly-A tracts via RRM 3. May be involved in neuronal differentiation and maintenance. Plays a role in the stabilization of GAP43 mRNA and in spatial learning. The chain is ELAV-like protein 3 (ELAVL3) from Homo sapiens (Human).